Here is a 363-residue protein sequence, read N- to C-terminus: S-methylmethionine--homocysteine S-methyltransferase BHMT2 (363 aa).

The Hcy-binding domain maps to 11 to 305 (RGILERLESG…YHIRAIAEEL (295 aa)). Positions 208, 290, and 291 each coordinate Zn(2+). Ser-321 bears the Phosphoserine mark.

As to quaternary structure, homotetramer. Zn(2+) is required as a cofactor.

The enzyme catalyses S-methyl-L-methionine + L-homocysteine = 2 L-methionine + H(+). It functions in the pathway amino-acid biosynthesis; L-methionine biosynthesis via de novo pathway; L-methionine from L-homocysteine (BhmT route): step 1/1. Involved in the regulation of homocysteine metabolism. Converts betaine and homocysteine to dimethylglycine and methionine, respectively. This reaction is also required for the irreversible oxidation of choline. This chain is S-methylmethionine--homocysteine S-methyltransferase BHMT2 (BHMT2), found in Pongo abelii (Sumatran orangutan).